The chain runs to 294 residues: tRNA dimethylallyltransferase (294 aa).

10 to 17 (GPTAVGKT) lines the ATP pocket. Substrate is bound at residue 12–17 (TAVGKT). The interval 35-38 (DSQQ) is interaction with substrate tRNA.

It belongs to the IPP transferase family. Monomer. Mg(2+) serves as cofactor.

It catalyses the reaction adenosine(37) in tRNA + dimethylallyl diphosphate = N(6)-dimethylallyladenosine(37) in tRNA + diphosphate. Catalyzes the transfer of a dimethylallyl group onto the adenine at position 37 in tRNAs that read codons beginning with uridine, leading to the formation of N6-(dimethylallyl)adenosine (i(6)A). The sequence is that of tRNA dimethylallyltransferase from Streptococcus pneumoniae serotype 19F (strain G54).